A 179-amino-acid chain; its full sequence is Large ribosomal subunit protein uL6 (179 aa).

Belongs to the universal ribosomal protein uL6 family. As to quaternary structure, part of the 50S ribosomal subunit.

Its function is as follows. This protein binds to the 23S rRNA, and is important in its secondary structure. It is located near the subunit interface in the base of the L7/L12 stalk, and near the tRNA binding site of the peptidyltransferase center. The polypeptide is Large ribosomal subunit protein uL6 (Geotalea daltonii (strain DSM 22248 / JCM 15807 / FRC-32) (Geobacter daltonii)).